Here is a 390-residue protein sequence, read N- to C-terminus: MRRILYLEPVGGIAGDMFLAAGLDLGISPAELERALSGLRVPGWKLAVSRAVRHAISGTHLDVVLDAREAHPHRAYADIRRLIEEADTLPPRAKERALAVFRAIGEAEAKVHGVSIDDIHFHEVGAVDSIVDICGAAVVLELLGNPEVHAAPPPLGSGTIRVAHGAMPIPVPATLELLRDVPVRFEGVGELTTPTGAALLKVLAHIGHPPDFIVEKVGYGVGTKDFKDRPNVLRASLGRLEQASNEGLWVVEANLDDATPQLLGHLLERLLAVGALDAWVTPVVMKKSRPGHLLSALVEGGTREAIVDVVLRESTTLGVRYHRVERQALERDWVEVETPWGKVRVKRGLRQGAVLNAHPEFEDCRQVAEAAGVPVKQVMAAAVAALGPKD.

It belongs to the LarC family.

The polypeptide is Putative nickel insertion protein (Myxococcus xanthus (strain DK1622)).